Reading from the N-terminus, the 310-residue chain is Protein N-terminal asparagine amidohydrolase (310 aa).

In terms of assembly, monomer.

It is found in the cytoplasm. The catalysed reaction is N-terminal L-asparaginyl-[protein] + H2O + H(+) = N-terminal L-aspartyl-[protein] + NH4(+). Its function is as follows. N-terminal asparagine deamidase that mediates deamidation of N-terminal asparagine residues to aspartate. Required for the ubiquitin-dependent turnover of intracellular proteins that initiate with Met-Asn. These proteins are acetylated on the retained initiator methionine and can subsequently be modified by the removal of N-acetyl methionine by acylaminoacid hydrolase (AAH). Conversion of the resulting N-terminal asparagine to aspartate by NTAN1/PNAD renders the protein susceptible to arginylation, polyubiquitination and degradation as specified by the N-end rule. This enzyme does not act on substrates with internal or C-terminal asparagines and does not act on glutamine residues in any position. The chain is Protein N-terminal asparagine amidohydrolase from Mus musculus (Mouse).